Here is a 358-residue protein sequence, read N- to C-terminus: Ganglioside-induced differentiation-associated protein 1 (358 aa).

The GST N-terminal domain maps to 24 to 105 (VKLILYHWTH…YLEQTFLDEK (82 aa)). Glycyl lysine isopeptide (Lys-Gly) (interchain with G-Cter in ubiquitin) cross-links involve residues Lys50, Lys172, Lys173, Lys188, and Lys190. One can recognise a GST C-terminal domain in the interval 153–309 (PAYATTRIRS…LISAVLPTAF (157 aa)). The residue at position 203 (Lys203) is an N6-acetyllysine; alternate. Lys203 participates in a covalent cross-link: Glycyl lysine isopeptide (Lys-Gly) (interchain with G-Cter in ubiquitin); alternate. Glycyl lysine isopeptide (Lys-Gly) (interchain with G-Cter in ubiquitin) cross-links involve residues Lys206, Lys207, and Lys214. 2 helical membrane passes run 292–312 (VLGH…FRVA) and 320–340 (LGTT…FMLF). Residues 320 to 358 (LGTTLVVGLLAGMGYFAFMLFRKRLGSMILALRPRPNYF) form a required for mitochondrial localization region.

The protein belongs to the GST superfamily. As to quaternary structure, homodimer. Post-translationally, ubiquitinated by PRKN during mitophagy, leading to its degradation and enhancement of mitophagy. Deubiquitinated by USP30.

It localises to the mitochondrion outer membrane. The protein localises to the cytoplasm. Functionally, regulates the mitochondrial network by promoting mitochondrial fission. This Bos taurus (Bovine) protein is Ganglioside-induced differentiation-associated protein 1 (GDAP1).